A 74-amino-acid chain; its full sequence is Arabinogalactan protein 20 (74 aa).

The signal sequence occupies residues 1 to 26; sequence MASRNSVAVIALFAFVFAVISPFAGA. A Pyrrolidone carboxylic acid modification is found at Q27. 3 positions are modified to 4-hydroxyproline: P31, P33, and P35. O-linked (Ara...) hydroxyproline glycosylation is found at P31, P33, and P35. A lipid anchor (GPI-anchor amidated serine) is attached at S37. A propeptide spans 38–74 (removed in mature form); that stretch reads DGTSIDQGIAYLLMVVALVLTYLIHPLDASSSSYTFF.

The protein belongs to the AG-peptide AGP family. Contains 4-hydroxyproline; hydroxylated on Pro-31, Pro-33 and Pro-35. In terms of processing, O-glycosylated on hydroxyprolines; noncontiguous hydroxylproline residues are glycosylated with arabinogalactan.

The protein resides in the cell membrane. In terms of biological role, proteoglycan that seems to be implicated in diverse developmental roles such as differentiation, cell-cell recognition, embryogenesis and programmed cell death. The polypeptide is Arabinogalactan protein 20 (Arabidopsis thaliana (Mouse-ear cress)).